A 436-amino-acid polypeptide reads, in one-letter code: Cholecystokinin receptor type A (436 aa).

The Extracellular portion of the chain corresponds to 1–41 (MDVVDSLLMNGSNITPPCELGLENETLFCLDQPQPSKEWQS). N-linked (GlcNAc...) asparagine glycans are attached at residues Asn-10 and Asn-24. Cysteines 18 and 29 form a disulfide. A helical membrane pass occupies residues 42–67 (AVQILLYSFIFLLSVLGNTLVITVLI). Residues 68–77 (RNKRMRTVTN) lie on the Cytoplasmic side of the membrane. Residues 78–104 (IFLLSLAVSDLMLCLFCMPFNLIPNLL) form a helical membrane-spanning segment. Topologically, residues 105–115 (KDFIFGSAVCK) are extracellular. A disulfide bridge connects residues Cys-114 and Cys-196. The helical transmembrane segment at 116–137 (TTTYFMGTSVSVSTFNLVAISL) threads the bilayer. The Cytoplasmic portion of the chain corresponds to 138–157 (ERYGAICRPLQSRVWQTKSH). A helical membrane pass occupies residues 158–178 (ALKVIAATWCLSFTIMTPYPI). At 179 to 210 (YSNLVPFTKNNNQTANMCRFLLPSDAMQQSWQ) the chain is on the extracellular side. A glycan (N-linked (GlcNAc...) asparagine) is linked at Asn-190. Residues 211–234 (TFLLLILFLIPGVVMVVAYGLISL) form a helical membrane-spanning segment. Residues 235 to 321 (ELYQGIKFDA…NLIAKKRVIR (87 aa)) are Cytoplasmic-facing. Residues 252–280 (EKRLSSGGGGGGGSSSSRYEDSDGCYLQK) are disordered. The helical transmembrane segment at 322–342 (MLIVIVVLFFLCWMPIFSANA) threads the bilayer. Over 343 to 357 (WRAYDTVSAEKHLSG) the chain is Extracellular. A helical transmembrane segment spans residues 358 to 381 (TPISFILLLSYTSSCVNPIIYCFM). The Cytoplasmic segment spans residues 382-436 (NKRFRLGFMATFPCCPNPGPTGVRGEVGEEEDGRTIRASLSRYSYSHMSTSAPPH). Cys-395 carries S-palmitoyl cysteine lipidation.

It belongs to the G-protein coupled receptor 1 family.

It is found in the cell membrane. Receptor for cholecystokinin. Mediates pancreatic growth and enzyme secretion, smooth muscle contraction of the gall bladder and stomach. Has a 1000-fold higher affinity for CCK rather than for gastrin. It modulates feeding and dopamine-induced behavior in the central and peripheral nervous system. This receptor mediates its action by association with G proteins that activate a phosphatidylinositol-calcium second messenger system. This chain is Cholecystokinin receptor type A (Cckar), found in Mus musculus (Mouse).